A 96-amino-acid polypeptide reads, in one-letter code: Small ribosomal subunit protein bS6 (96 aa).

It belongs to the bacterial ribosomal protein bS6 family.

Binds together with bS18 to 16S ribosomal RNA. In Heliobacterium modesticaldum (strain ATCC 51547 / Ice1), this protein is Small ribosomal subunit protein bS6.